Here is a 262-residue protein sequence, read N- to C-terminus: Tryptophan synthase alpha chain (262 aa).

Active-site proton acceptor residues include Glu-48 and Asp-59.

It belongs to the TrpA family. Tetramer of two alpha and two beta chains.

It catalyses the reaction (1S,2R)-1-C-(indol-3-yl)glycerol 3-phosphate + L-serine = D-glyceraldehyde 3-phosphate + L-tryptophan + H2O. Its pathway is amino-acid biosynthesis; L-tryptophan biosynthesis; L-tryptophan from chorismate: step 5/5. In terms of biological role, the alpha subunit is responsible for the aldol cleavage of indoleglycerol phosphate to indole and glyceraldehyde 3-phosphate. This is Tryptophan synthase alpha chain from Helicobacter pylori (strain ATCC 700392 / 26695) (Campylobacter pylori).